The primary structure comprises 237 residues: Orotidine 5'-phosphate decarboxylase (237 aa).

Substrate-binding positions include D17, K39, 66 to 75 (DLKLHDIGNT), T121, R182, Q191, G211, and R212. Catalysis depends on K68, which acts as the Proton donor.

This sequence belongs to the OMP decarboxylase family. Type 1 subfamily. As to quaternary structure, homodimer.

It carries out the reaction orotidine 5'-phosphate + H(+) = UMP + CO2. It participates in pyrimidine metabolism; UMP biosynthesis via de novo pathway; UMP from orotate: step 2/2. Catalyzes the decarboxylation of orotidine 5'-monophosphate (OMP) to uridine 5'-monophosphate (UMP). This Bradyrhizobium diazoefficiens (strain JCM 10833 / BCRC 13528 / IAM 13628 / NBRC 14792 / USDA 110) protein is Orotidine 5'-phosphate decarboxylase.